Here is a 291-residue protein sequence, read N- to C-terminus: tRNA-uridine aminocarboxypropyltransferase 1 (291 aa).

The tract at residues 158-181 is disordered; it reads KNSAYEPSSKRPKFSPENDKNTYE. Over residues 171–181 the composition is skewed to basic and acidic residues; it reads FSPENDKNTYE. A DXTW motif is present at residues 199-202; that stretch reads DSTW.

This sequence belongs to the TDD superfamily. DTWD1 family.

The protein resides in the nucleus. The catalysed reaction is a uridine in tRNA + S-adenosyl-L-methionine = a 3-[(3S)-3-amino-3-carboxypropyl]uridine in tRNA + S-methyl-5'-thioadenosine + H(+). Its function is as follows. Catalyzes the formation of 3-(3-amino-3-carboxypropyl)uridine (acp3U) at position 20 in the D-loop of several cytoplasmic tRNAs (acp3U(20)). In Xenopus laevis (African clawed frog), this protein is tRNA-uridine aminocarboxypropyltransferase 1.